A 347-amino-acid chain; its full sequence is UPF0324 membrane protein Atu0671 (347 aa).

Helical transmembrane passes span 15–37 (LRWLSPLLPGILICAAVSCAAIL), 50–72 (WLGDLVLAILIGTLLRSLVSLPV), 105–127 (AGGLLIGGIALIVALSLVFSYAA), 140–162 (LIACGNSICGNSAIAAAAPAIGA), 172–194 (AFTAVLGVVAVLLMPFLPQLLGL), 201–223 (IFAGLTVYAVPQVLAATAPLGAV), 233–250 (LIRVLMLGPVIATLSVIH), 263–282 (MVPWFIIGFVLMIMARSFGL), 287–309 (LLSPVASLSNILTIMSMAALGLS), and 322–344 (VIIAASLSLVLLGVLSFGLILLT).

Belongs to the UPF0324 family.

The protein resides in the cell membrane. This Agrobacterium fabrum (strain C58 / ATCC 33970) (Agrobacterium tumefaciens (strain C58)) protein is UPF0324 membrane protein Atu0671.